The chain runs to 212 residues: Probable GTP-binding protein EngB (212 aa).

Positions 25–199 (FGYEVAFAGR…WAKLDEWMEY (175 aa)) constitute an EngB-type G domain. Residues 33–40 (GRSNAGKS), 60–64 (GRTQL), 78–81 (DLPG), 145–148 (TKSD), and 178–180 (FSS) each bind GTP. Mg(2+) contacts are provided by serine 40 and threonine 62.

It belongs to the TRAFAC class TrmE-Era-EngA-EngB-Septin-like GTPase superfamily. EngB GTPase family. Mg(2+) is required as a cofactor.

Necessary for normal cell division and for the maintenance of normal septation. This chain is Probable GTP-binding protein EngB, found in Hydrogenovibrio crunogenus (strain DSM 25203 / XCL-2) (Thiomicrospira crunogena).